A 443-amino-acid polypeptide reads, in one-letter code: ATP-dependent protease ATPase subunit HslU (443 aa).

ATP-binding positions include isoleucine 18, 60–65 (GVGKTE), aspartate 256, glutamate 321, and arginine 393.

It belongs to the ClpX chaperone family. HslU subfamily. In terms of assembly, a double ring-shaped homohexamer of HslV is capped on each side by a ring-shaped HslU homohexamer. The assembly of the HslU/HslV complex is dependent on binding of ATP.

Its subcellular location is the cytoplasm. Its function is as follows. ATPase subunit of a proteasome-like degradation complex; this subunit has chaperone activity. The binding of ATP and its subsequent hydrolysis by HslU are essential for unfolding of protein substrates subsequently hydrolyzed by HslV. HslU recognizes the N-terminal part of its protein substrates and unfolds these before they are guided to HslV for hydrolysis. The polypeptide is ATP-dependent protease ATPase subunit HslU (Yersinia pestis bv. Antiqua (strain Antiqua)).